Consider the following 519-residue polypeptide: MNEQQRKQQSQIRTEQANVDRIKNTSSEDMIAKYFQQEYEPQSPDIKQARKRKREDVQFHYDFSIPEDMEKIGHGKKFLIRTYGCQMNEHDTEVMAGILSEMGYESTTVTEEADIILLNTCAIRENAENKVFGEIGHLKPLKLENPDLIIGVCGCMSQEESVVDRILQKHQHIDLIFGTHNIHRLPHLVKEALFGKEMIVEVWSKEGDIIENLPKARKGKIKAWVNIMYGCDKFCTYCIVPMTRGKERSRRPKDIIQEVRHLVAQGYQEVTLLGQNVNAYGKDFEDIEYGLGDLMNDIHKIDIPRVRFTTSHPRDFDDRLIEVLAQGGNLLDHIHLPVQSGSSEILKKMNRKYTREEYLELVRKIRIAMPNATLTTDIIVGFPNETEEQFEETMTLVEEVGFEAAYTFIYSPREGTPAARKKDDVPEEVKKQRLYRLNELVNKQSAASMKDYAGKKVKVLVEGESKKDPEVLAGYTEKNKLVNFKGPKSSIGKIVEVEITETKTWSLNGVMVENTVEVN.

The disordered stretch occupies residues 1–23 (MNEQQRKQQSQIRTEQANVDRIK). Positions 7 to 17 (KQQSQIRTEQA) are enriched in polar residues. An MTTase N-terminal domain is found at 76–194 (KKFLIRTYGC…LPHLVKEALF (119 aa)). Cysteine 85, cysteine 121, cysteine 155, cysteine 231, cysteine 235, and cysteine 238 together coordinate [4Fe-4S] cluster. The region spanning 217-450 (RKGKIKAWVN…VNKQSAASMK (234 aa)) is the Radical SAM core domain. One can recognise a TRAM domain in the interval 450-513 (KDYAGKKVKV…TWSLNGVMVE (64 aa)).

This sequence belongs to the methylthiotransferase family. MiaB subfamily. As to quaternary structure, monomer. Requires [4Fe-4S] cluster as cofactor.

The protein resides in the cytoplasm. The enzyme catalyses N(6)-dimethylallyladenosine(37) in tRNA + (sulfur carrier)-SH + AH2 + 2 S-adenosyl-L-methionine = 2-methylsulfanyl-N(6)-dimethylallyladenosine(37) in tRNA + (sulfur carrier)-H + 5'-deoxyadenosine + L-methionine + A + S-adenosyl-L-homocysteine + 2 H(+). Functionally, catalyzes the methylthiolation of N6-(dimethylallyl)adenosine (i(6)A), leading to the formation of 2-methylthio-N6-(dimethylallyl)adenosine (ms(2)i(6)A) at position 37 in tRNAs that read codons beginning with uridine. This chain is tRNA-2-methylthio-N(6)-dimethylallyladenosine synthase, found in Oceanobacillus iheyensis (strain DSM 14371 / CIP 107618 / JCM 11309 / KCTC 3954 / HTE831).